We begin with the raw amino-acid sequence, 112 residues long: Integration host factor subunit alpha (112 aa).

The protein belongs to the bacterial histone-like protein family. As to quaternary structure, heterodimer of an alpha and a beta chain.

In terms of biological role, this protein is one of the two subunits of integration host factor, a specific DNA-binding protein that functions in genetic recombination as well as in transcriptional and translational control. This chain is Integration host factor subunit alpha, found in Rhizobium rhizogenes (strain K84 / ATCC BAA-868) (Agrobacterium radiobacter).